The sequence spans 579 residues: Folliculin (579 aa).

The interval 30-81 (PQGDGNEDSPGQGEQAEEEEGGIQMNSRMRAHSPAEGASVESSSPGPKKSDM) is disordered. Phosphoserine occurs at positions 62 and 73. The 157-residue stretch at 86-242 (RSLAAGHPGY…RNGNAARSLT (157 aa)) folds into the uDENN FLCN/SMCR8-type domain. Residues 210 to 220 (AEQFGCPQRAQ) are essential for interaction with LDHA. The stretch at 287–310 (EKLADLEEESESWDNSEAEEEEKA) forms a coiled coil. Positions 294-308 (EESESWDNSEAEEEE) are enriched in acidic residues. The interval 294–337 (EESESWDNSEAEEEEKAPVLPESTEGRELTQGPAESSSLSGCGS) is disordered. Phosphoserine is present on serine 302. Residues 326–336 (PAESSSLSGCG) show a composition bias toward polar residues. In terms of domain architecture, cDENN FLCN/SMCR8-type spans 339 to 491 (QPRKLPVFKS…ILNKIEAALT (153 aa)). Phosphoserine; by ULK1 occurs at positions 406, 537, and 542. The dDENN FLCN/SMCR8-type domain occupies 493–558 (QNLSVDVVDQ…LLKFWMTGLS (66 aa)). Serine 571 carries the post-translational modification Phosphoserine.

The protein belongs to the folliculin family. As to quaternary structure, interacts (via C-terminus) with FNIP1 or FNIP2 (via C-terminus). Component of the lysosomal folliculin complex (LFC), composed of FLCN, FNIP1 (or FNIP2), RagA/RRAGA or RagB/RRAGB GDP-bound, RagC/RRAGC or RagD/RRAGD GTP-bound, and Ragulator. Interaction with FNIP1 or FNIP2 mediates indirect interaction with the PRKAA1, PRKAB1 and PRKAG1 subunits of 5'-AMP-activated protein kinase (AMPK). Interacts with HSP90AA1 in the presence of FNIP1. Interacts with HSP70, STUB1, CDC37, AHSA1, CCT2, STIP1, PTGES3 and PPP5C. Interacts with GABARAP; interaction takes place in the presence of FNIP1 and/or FNIP2. Interacts with RILP; the interaction is direct and promotes association between RILP and RAB34. Interacts with KIF3A and KIF3B. Interacts with lactate dehydrogenase LDHA, but not LDHB; the interaction is direct, may preferentially bind LDHA dimers rather than tetramers, and regulates LDHA activity, acting as an uncompetitive inhibitor. In terms of processing, phosphorylation by ULK1 modulates the interaction with GABARAP and is required to regulate autophagy. Expressed in most tissues tested, including skin, lung, kidney, heart, testis and stomach.

The protein resides in the lysosome membrane. It is found in the cytoplasm. It localises to the cytosol. Its subcellular location is the cell projection. The protein localises to the cilium. The protein resides in the cytoskeleton. It is found in the microtubule organizing center. It localises to the centrosome. Its subcellular location is the spindle. The protein localises to the nucleus. GTPase-activating activity is inhibited in the folliculin complex (LFC), which stabilizes the GDP-bound state of RagA/RRAGA (or RagB/RRAGB), because Arg-164 is located far from the RagC/RRAGC or RagD/RRAGD nucleotide pocket. Disassembly of the LFC complex upon amino acid restimulation liberates the GTPase-activating activity. Functionally, multi-functional protein, involved in both the cellular response to amino acid availability and in the regulation of glycolysis. GTPase-activating protein that plays a key role in the cellular response to amino acid availability through regulation of the non-canonical mTORC1 signaling cascade controlling the MiT/TFE factors TFEB and TFE3. Activates mTORC1 by acting as a GTPase-activating protein: specifically stimulates GTP hydrolysis by RagC/RRAGC or RagD/RRAGD, promoting the conversion to the GDP-bound state of RagC/RRAGC or RagD/RRAGD, and thereby activating the kinase activity of mTORC1. The GTPase-activating activity is inhibited during starvation and activated in presence of nutrients. Acts as a key component for non-canonical mTORC1-dependent control of the MiT/TFE factors TFEB and TFE3, while it is not involved in mTORC1-dependent phosphorylation of canonical RPS6KB1/S6K1 and EIF4EBP1/4E-BP1. In low-amino acid conditions, the lysosomal folliculin complex (LFC) is formed on the membrane of lysosomes, which inhibits the GTPase-activating activity of FLCN, inactivates mTORC1 and maximizes nuclear translocation of TFEB and TFE3. Upon amino acid restimulation, RagA/RRAGA (or RagB/RRAGB) nucleotide exchange promotes disassembly of the LFC complex and liberates the GTPase-activating activity of FLCN, leading to activation of mTORC1 and subsequent cytoplasmic retention of TFEB and TFE3. Indirectly acts as a positive regulator of Wnt signaling by promoting mTOR-dependent cytoplasmic retention of MiT/TFE factor TFE3. Required for the exit of hematopoietic stem cell from pluripotency by promoting mTOR-dependent cytoplasmic retention of TFE3, thereby increasing Wnt signaling. Acts as an inhibitor of browning of adipose tissue by regulating mTOR-dependent cytoplasmic retention of TFE3. Involved in the control of embryonic stem cells differentiation; together with LAMTOR1 it is necessary to recruit and activate RagC/RRAGC and RagD/RRAGD at the lysosomes, and to induce exit of embryonic stem cells from pluripotency via non-canonical, mTOR-independent TFE3 inactivation. In response to flow stress, regulates STK11/LKB1 accumulation and mTORC1 activation through primary cilia: may act by recruiting STK11/LKB1 to primary cilia for activation of AMPK resided at basal bodies, causing mTORC1 down-regulation. Together with FNIP1 and/or FNIP2, regulates autophagy: following phosphorylation by ULK1, interacts with GABARAP and promotes autophagy. Required for starvation-induced perinuclear clustering of lysosomes by promoting association of RILP with its effector RAB34. Regulates glycolysis by binding to lactate dehydrogenase LDHA, acting as an uncompetitive inhibitor. The chain is Folliculin from Homo sapiens (Human).